The primary structure comprises 180 residues: ATP-dependent protease subunit HslV (180 aa).

T7 is an active-site residue. Na(+) is bound by residues G163, C166, and T169.

It belongs to the peptidase T1B family. HslV subfamily. In terms of assembly, a double ring-shaped homohexamer of HslV is capped on each side by a ring-shaped HslU homohexamer. The assembly of the HslU/HslV complex is dependent on binding of ATP.

Its subcellular location is the cytoplasm. The enzyme catalyses ATP-dependent cleavage of peptide bonds with broad specificity.. Its activity is regulated as follows. Allosterically activated by HslU binding. Functionally, protease subunit of a proteasome-like degradation complex believed to be a general protein degrading machinery. This chain is ATP-dependent protease subunit HslV, found in Alcanivorax borkumensis (strain ATCC 700651 / DSM 11573 / NCIMB 13689 / SK2).